Reading from the N-terminus, the 290-residue chain is UPF0761 membrane protein YihY (290 aa).

The next 6 helical transmembrane spans lie at 44 to 64, 104 to 124, 140 to 160, 183 to 203, 210 to 230, and 244 to 264; these read LLSLVPLVAVVFALFAAFPMF, VGACGLIVTALLLMYSIDSAL, FAVYWMILTLGPLLAGASLAI, IFPLLLSWISFWLLYSIVPTI, AIVGAFVAALLFEAGKKGFAL, and VLAVIPILFVWVYWTWCIVLL.

The protein belongs to the UPF0761 family.

It localises to the cell inner membrane. The sequence is that of UPF0761 membrane protein YihY from Shigella boydii serotype 4 (strain Sb227).